The following is a 358-amino-acid chain: UDP-N-acetylglucosamine--N-acetylmuramyl-(pentapeptide) pyrophosphoryl-undecaprenol N-acetylglucosamine transferase (358 aa).

UDP-N-acetyl-alpha-D-glucosamine-binding positions include 11-13, N120, R161, S188, and Q282; that span reads TGG.

It belongs to the glycosyltransferase 28 family. MurG subfamily.

It is found in the cell inner membrane. It catalyses the reaction di-trans,octa-cis-undecaprenyl diphospho-N-acetyl-alpha-D-muramoyl-L-alanyl-D-glutamyl-meso-2,6-diaminopimeloyl-D-alanyl-D-alanine + UDP-N-acetyl-alpha-D-glucosamine = di-trans,octa-cis-undecaprenyl diphospho-[N-acetyl-alpha-D-glucosaminyl-(1-&gt;4)]-N-acetyl-alpha-D-muramoyl-L-alanyl-D-glutamyl-meso-2,6-diaminopimeloyl-D-alanyl-D-alanine + UDP + H(+). It participates in cell wall biogenesis; peptidoglycan biosynthesis. In terms of biological role, cell wall formation. Catalyzes the transfer of a GlcNAc subunit on undecaprenyl-pyrophosphoryl-MurNAc-pentapeptide (lipid intermediate I) to form undecaprenyl-pyrophosphoryl-MurNAc-(pentapeptide)GlcNAc (lipid intermediate II). The polypeptide is UDP-N-acetylglucosamine--N-acetylmuramyl-(pentapeptide) pyrophosphoryl-undecaprenol N-acetylglucosamine transferase (Parasynechococcus marenigrum (strain WH8102)).